A 100-amino-acid polypeptide reads, in one-letter code: MDVLTVVVSTADLHLANLQEVKRRRRRSHVRNRRARGYKSPSERARSIARLFQMLPFHGVDPVDWFPDVVRSPSVTSLVSYESFDDTDWFAGNEWAEGSF.

The Nuclear localization signal signature appears at 22 to 27 (KRRRRR).

This sequence belongs to the cucumovirus/ilarvirus protein 2b family. Homotetramer. Interacts with host AGO1; this interaction blocks AGO1 cleavage activity to attenuate RNA silencing and thus counter host defense. Interacts with host JAZ.

Its subcellular location is the host nucleus. Functionally, multifunctional protein that plays two independent roles: viral suppressor of host RNAi (VSR) and viral inducer of host attractiveness to insect vectors (VIA). Acts as a suppressor of RNA-mediated gene silencing, also known as post-transcriptional gene silencing (PTGS), a mechanism of plant viral defense that limits the accumulation of viral RNAs. May directly interfere with mobile silencing signaling. Also inhibits signal transduction by the phytohormone jasmonate, making the infected plant more attractive to aphids, which are the second host to play a role as a dissemination vector. Acts by binding to and inhibiting JAZ degradation in the host. In Cucumis sativus (Cucumber), this protein is Suppressor of silencing 2b.